A 63-amino-acid polypeptide reads, in one-letter code: Large ribosomal subunit protein bL35 (63 aa).

This sequence belongs to the bacterial ribosomal protein bL35 family.

This is Large ribosomal subunit protein bL35 from Thermobifida fusca (strain YX).